A 337-amino-acid chain; its full sequence is Ketol-acid reductoisomerase (NADP(+)) (337 aa).

The KARI N-terminal Rossmann domain maps to 3 to 183 (IELLYDADAD…GGARAGVIPT (181 aa)). Residues 26–29 (YGSQ), Arg49, Ser52, Ser54, and 84–87 (DTSQ) contribute to the NADP(+) site. His109 is a catalytic residue. Gly135 is an NADP(+) binding site. The 146-residue stretch at 184-329 (TFREETETDL…SKLRDLMSWV (146 aa)) folds into the KARI C-terminal knotted domain. The Mg(2+) site is built by Asp192, Glu196, Glu228, and Glu232. Substrate is bound at residue Ser253.

It belongs to the ketol-acid reductoisomerase family. The cofactor is Mg(2+).

It carries out the reaction (2R)-2,3-dihydroxy-3-methylbutanoate + NADP(+) = (2S)-2-acetolactate + NADPH + H(+). It catalyses the reaction (2R,3R)-2,3-dihydroxy-3-methylpentanoate + NADP(+) = (S)-2-ethyl-2-hydroxy-3-oxobutanoate + NADPH + H(+). It participates in amino-acid biosynthesis; L-isoleucine biosynthesis; L-isoleucine from 2-oxobutanoate: step 2/4. It functions in the pathway amino-acid biosynthesis; L-valine biosynthesis; L-valine from pyruvate: step 2/4. In terms of biological role, involved in the biosynthesis of branched-chain amino acids (BCAA). Catalyzes an alkyl-migration followed by a ketol-acid reduction of (S)-2-acetolactate (S2AL) to yield (R)-2,3-dihydroxy-isovalerate. In the isomerase reaction, S2AL is rearranged via a Mg-dependent methyl migration to produce 3-hydroxy-3-methyl-2-ketobutyrate (HMKB). In the reductase reaction, this 2-ketoacid undergoes a metal-dependent reduction by NADPH to yield (R)-2,3-dihydroxy-isovalerate. This chain is Ketol-acid reductoisomerase (NADP(+)), found in Corynebacterium diphtheriae (strain ATCC 700971 / NCTC 13129 / Biotype gravis).